Reading from the N-terminus, the 440-residue chain is 5-methylthioadenosine/S-adenosylhomocysteine deaminase (440 aa).

Residues H69 and H71 each coordinate Zn(2+). Positions 98 and 190 each coordinate substrate. Position 217 (H217) interacts with Zn(2+). Substrate contacts are provided by E220 and D305. A Zn(2+)-binding site is contributed by D305.

Belongs to the metallo-dependent hydrolases superfamily. MTA/SAH deaminase family. Zn(2+) is required as a cofactor.

The catalysed reaction is S-adenosyl-L-homocysteine + H2O + H(+) = S-inosyl-L-homocysteine + NH4(+). It carries out the reaction S-methyl-5'-thioadenosine + H2O + H(+) = S-methyl-5'-thioinosine + NH4(+). Functionally, catalyzes the deamination of 5-methylthioadenosine and S-adenosyl-L-homocysteine into 5-methylthioinosine and S-inosyl-L-homocysteine, respectively. Is also able to deaminate adenosine. This is 5-methylthioadenosine/S-adenosylhomocysteine deaminase from Desulfovibrio desulfuricans (strain ATCC 27774 / DSM 6949 / MB).